A 348-amino-acid polypeptide reads, in one-letter code: Dihydroorotase (348 aa).

Zn(2+) contacts are provided by His17 and His19. Substrate-binding positions include 19–21 (HLR) and Asn45. Zn(2+) contacts are provided by Lys103, His140, and His178. N6-carboxylysine is present on Lys103. His140 serves as a coordination point for substrate. Leu223 contacts substrate. Residue Asp251 participates in Zn(2+) binding. Asp251 is an active-site residue. Residues His255 and Ala267 each coordinate substrate.

Belongs to the metallo-dependent hydrolases superfamily. DHOase family. Class II DHOase subfamily. In terms of assembly, homodimer. The cofactor is Zn(2+).

The enzyme catalyses (S)-dihydroorotate + H2O = N-carbamoyl-L-aspartate + H(+). Its pathway is pyrimidine metabolism; UMP biosynthesis via de novo pathway; (S)-dihydroorotate from bicarbonate: step 3/3. In terms of biological role, catalyzes the reversible cyclization of carbamoyl aspartate to dihydroorotate. In Escherichia coli O6:K15:H31 (strain 536 / UPEC), this protein is Dihydroorotase.